The chain runs to 162 residues: Transcription elongation factor GreA (162 aa).

Residues 45–74 adopt a coiled-coil conformation; the sequence is ENAEYEAAREKQAFIEGRIKELEDMTARAE.

It belongs to the GreA/GreB family.

Its function is as follows. Necessary for efficient RNA polymerase transcription elongation past template-encoded arresting sites. The arresting sites in DNA have the property of trapping a certain fraction of elongating RNA polymerases that pass through, resulting in locked ternary complexes. Cleavage of the nascent transcript by cleavage factors such as GreA or GreB allows the resumption of elongation from the new 3'terminus. GreA releases sequences of 2 to 3 nucleotides. The sequence is that of Transcription elongation factor GreA from Rickettsia conorii (strain ATCC VR-613 / Malish 7).